The chain runs to 480 residues: Methylenetetrahydrofolate--tRNA-(uracil-5-)-methyltransferase TrmFO (480 aa).

G15–G20 contacts FAD.

This sequence belongs to the MnmG family. TrmFO subfamily. FAD serves as cofactor.

The protein localises to the cytoplasm. The enzyme catalyses uridine(54) in tRNA + (6R)-5,10-methylene-5,6,7,8-tetrahydrofolate + NADH + H(+) = 5-methyluridine(54) in tRNA + (6S)-5,6,7,8-tetrahydrofolate + NAD(+). It carries out the reaction uridine(54) in tRNA + (6R)-5,10-methylene-5,6,7,8-tetrahydrofolate + NADPH + H(+) = 5-methyluridine(54) in tRNA + (6S)-5,6,7,8-tetrahydrofolate + NADP(+). In terms of biological role, catalyzes the folate-dependent formation of 5-methyl-uridine at position 54 (M-5-U54) in all tRNAs. The chain is Methylenetetrahydrofolate--tRNA-(uracil-5-)-methyltransferase TrmFO from Caulobacter sp. (strain K31).